Consider the following 353-residue polypeptide: GDP-mannose transporter (353 aa).

At methionine 1–serine 31 the chain is on the cytoplasmic side. A helical transmembrane segment spans residues isoleucine 32–valine 52. Residues threonine 53–asparagine 66 are Lumenal-facing. The helical transmembrane segment at phenylalanine 67–leucine 87 threads the bilayer. Over glycine 88 to lysine 102 the chain is Cytoplasmic. A helical membrane pass occupies residues tryptophan 103–glutamine 122. Residues tyrosine 123–serine 125 are Lumenal-facing. A helical membrane pass occupies residues isoleucine 126–phenylalanine 148. Residues glycine 149–threonine 154 are Cytoplasmic-facing. Residues methionine 155–tyrosine 172 form a helical membrane-spanning segment. Topologically, residues glycine 173–leucine 187 are lumenal. Residues leucine 188–isoleucine 208 form a helical membrane-spanning segment. Residues methionine 209–asparagine 227 lie on the Cytoplasmic side of the membrane. A helical membrane pass occupies residues asparagine 228–valine 248. The Lumenal segment spans residues asparagine 249–threonine 262. Asparagine 260 is a glycosylation site (N-linked (GlcNAc...) asparagine). Residues isoleucine 263–cysteine 283 traverse the membrane as a helical segment. Residues valine 284–threonine 290 are Cytoplasmic-facing. Residues threonine 291–alanine 313 form a helical membrane-spanning segment. The Lumenal segment spans residues alanine 314–asparagine 316. The chain crosses the membrane as a helical span at residues phenylalanine 317–alanine 336. Over lysine 337–lysine 353 the chain is Cytoplasmic.

The protein belongs to the TPT transporter family. SLC35D subfamily. Homooligomer.

It localises to the golgi apparatus membrane. The protein resides in the cytoplasmic vesicle membrane. The protein localises to the endoplasmic reticulum membrane. Involved in the import of GDP-mannose from the cytoplasm into the Golgi lumen. This Meyerozyma guilliermondii (strain ATCC 6260 / CBS 566 / DSM 6381 / JCM 1539 / NBRC 10279 / NRRL Y-324) (Yeast) protein is GDP-mannose transporter (VRG4).